Consider the following 191-residue polypeptide: Thymidine kinase (191 aa).

Residues 15–22 (GPMYSGKT) and 88–91 (DEAQ) each bind ATP. Residue E89 is the Proton acceptor of the active site. Positions 145, 148, 183, and 186 each coordinate Zn(2+).

Belongs to the thymidine kinase family. Homotetramer.

The protein localises to the cytoplasm. The enzyme catalyses thymidine + ATP = dTMP + ADP + H(+). This is Thymidine kinase from Clostridium botulinum (strain Kyoto / Type A2).